The following is a 150-amino-acid chain: Large ribosomal subunit protein bL9 (150 aa).

It belongs to the bacterial ribosomal protein bL9 family.

Binds to the 23S rRNA. The chain is Large ribosomal subunit protein bL9 from Shewanella piezotolerans (strain WP3 / JCM 13877).